Consider the following 815-residue polypeptide: Probable E3 ubiquitin-protein ligase hulA (815 aa).

A C2 domain is found at 1–112 (MGSNLPSQPN…EMGGDEMLTR (112 aa)). 2 disordered regions span residues 134–237 (NLST…GWER) and 253–353 (RTTT…YFVD). Composition is skewed to low complexity over residues 165 to 185 (ASAAHPAASPAPIDPAASNPS) and 202 to 212 (APGAAAGATPT). Composition is skewed to polar residues over residues 213–226 (NTQGSRTNLSSFED) and 253–270 (RTTTWTRPSSNYNEQTQR). Residues 229–262 (GRLPAGWERREDNLGRTYYVDHNTRTTTWTRPSS) enclose the WW 1 domain. The span at 279 to 294 (LERRAHQSRMLPEDRT) shows a compositional bias: basic and acidic residues. A compositionally biased stretch (polar residues) spans 295–308 (GANSPNLPETSQQA). Over residues 324 to 333 (ATGATTAGTG) the composition is skewed to low complexity. WW domains are found at residues 333-366 (GELPPGWEQRTTPEGRPYFVDHNTRTTTWVDPRR) and 393-426 (GPLPSGWEMRLTNTARVYFVDHNTKTTTWDDPRL). Residues 482–815 (SASDLKKRLM…VEETLGFGQE (334 aa)) form the HECT domain. The active-site Glycyl thioester intermediate is Cys-783.

It belongs to the RSP5/NEDD4 family. In terms of assembly, interacts with creD.

Its subcellular location is the cytoplasm. It carries out the reaction S-ubiquitinyl-[E2 ubiquitin-conjugating enzyme]-L-cysteine + [acceptor protein]-L-lysine = [E2 ubiquitin-conjugating enzyme]-L-cysteine + N(6)-ubiquitinyl-[acceptor protein]-L-lysine.. Its pathway is protein modification; protein ubiquitination. Functionally, E3 ubiquitin-protein ligase which accepts ubiquitin from an E2 ubiquitin-conjugating enzyme in the form of a thioester and then directly transfers the ubiquitin to targeted substrates. Probably involved in the regulatory network controlling carbon source utilization. In Aspergillus clavatus (strain ATCC 1007 / CBS 513.65 / DSM 816 / NCTC 3887 / NRRL 1 / QM 1276 / 107), this protein is Probable E3 ubiquitin-protein ligase hulA (hulA).